A 145-amino-acid polypeptide reads, in one-letter code: Large ribosomal subunit protein uL13 (145 aa).

Belongs to the universal ribosomal protein uL13 family. Part of the 50S ribosomal subunit.

Its function is as follows. This protein is one of the early assembly proteins of the 50S ribosomal subunit, although it is not seen to bind rRNA by itself. It is important during the early stages of 50S assembly. This is Large ribosomal subunit protein uL13 from Listeria innocua serovar 6a (strain ATCC BAA-680 / CLIP 11262).